Consider the following 561-residue polypeptide: 2-succinyl-5-enolpyruvyl-6-hydroxy-3-cyclohexene-1-carboxylate synthase (561 aa).

This sequence belongs to the TPP enzyme family. MenD subfamily. In terms of assembly, homodimer. Requires Mg(2+) as cofactor. It depends on Mn(2+) as a cofactor. Thiamine diphosphate serves as cofactor.

The catalysed reaction is isochorismate + 2-oxoglutarate + H(+) = 5-enolpyruvoyl-6-hydroxy-2-succinyl-cyclohex-3-ene-1-carboxylate + CO2. It functions in the pathway quinol/quinone metabolism; 1,4-dihydroxy-2-naphthoate biosynthesis; 1,4-dihydroxy-2-naphthoate from chorismate: step 2/7. It participates in cofactor biosynthesis; phylloquinone biosynthesis. In terms of biological role, catalyzes the thiamine diphosphate-dependent decarboxylation of 2-oxoglutarate and the subsequent addition of the resulting succinic semialdehyde-thiamine pyrophosphate anion to isochorismate to yield 2-succinyl-5-enolpyruvyl-6-hydroxy-3-cyclohexene-1-carboxylate (SEPHCHC). This is 2-succinyl-5-enolpyruvyl-6-hydroxy-3-cyclohexene-1-carboxylate synthase from Synechococcus sp. (strain CC9605).